The following is a 183-amino-acid chain: uncharacterized protein (183 aa).

A helical transmembrane segment spans residues 153–175 (LLYVFIRLFAGCLKVFRLCILWL).

The protein resides in the membrane. This is an uncharacterized protein from Saccharomyces cerevisiae (strain ATCC 204508 / S288c) (Baker's yeast).